Reading from the N-terminus, the 642-residue chain is Threonine--tRNA ligase (642 aa).

Residues 1 to 61 (MPVITLPDGS…ESDAQLAIIT (61 aa)) form the TGS domain. Residues 243–534 (DHRKIGKQLD…LTEEYAGFYP (292 aa)) are catalytic. Zn(2+) is bound by residues cysteine 334, histidine 385, and histidine 511.

The protein belongs to the class-II aminoacyl-tRNA synthetase family. Homodimer. It depends on Zn(2+) as a cofactor.

It is found in the cytoplasm. The catalysed reaction is tRNA(Thr) + L-threonine + ATP = L-threonyl-tRNA(Thr) + AMP + diphosphate + H(+). In terms of biological role, catalyzes the attachment of threonine to tRNA(Thr) in a two-step reaction: L-threonine is first activated by ATP to form Thr-AMP and then transferred to the acceptor end of tRNA(Thr). Also edits incorrectly charged L-seryl-tRNA(Thr). This chain is Threonine--tRNA ligase, found in Serratia proteamaculans (strain 568).